The primary structure comprises 238 residues: Ubiquinone biosynthesis O-methyltransferase (238 aa).

S-adenosyl-L-methionine is bound by residues R36, G56, D77, and M125.

The protein belongs to the methyltransferase superfamily. UbiG/COQ3 family.

The catalysed reaction is a 3-demethylubiquinol + S-adenosyl-L-methionine = a ubiquinol + S-adenosyl-L-homocysteine + H(+). The enzyme catalyses a 3-(all-trans-polyprenyl)benzene-1,2-diol + S-adenosyl-L-methionine = a 2-methoxy-6-(all-trans-polyprenyl)phenol + S-adenosyl-L-homocysteine + H(+). It participates in cofactor biosynthesis; ubiquinone biosynthesis. In terms of biological role, O-methyltransferase that catalyzes the 2 O-methylation steps in the ubiquinone biosynthetic pathway. In Histophilus somni (strain 2336) (Haemophilus somnus), this protein is Ubiquinone biosynthesis O-methyltransferase.